Consider the following 299-residue polypeptide: Taste receptor type 2 member 50 (299 aa).

Residue M1 is a topological domain, extracellular. Residues 2 to 22 traverse the membrane as a helical segment; that stretch reads VTFLHIFFSILILVLFVLGNF. The Cytoplasmic segment spans residues 23–55; that stretch reads ANGFIALVNFIDLVKRKKISSADQILTALAVSR. A helical transmembrane segment spans residues 56–76; it reads IGLLWALLLNWYLTVLNPAFY. Residues 77–87 are Extracellular-facing; that stretch reads SVELRITSYNA. A helical transmembrane segment spans residues 88 to 108; that stretch reads WVVTNHFSMWLAASLSIFYLL. Over 109–126 the chain is Cytoplasmic; that stretch reads KIANFSNLIFLHLKRRVR. The helical transmembrane segment at 127–147 threads the bilayer; that stretch reads SVILVILLGPLTFLVCHLFVA. The Extracellular portion of the chain corresponds to 148–181; sequence NMDESMSAEEYEGNMTGKLKLRNTVHLSYLTVTT. Residue N161 is glycosylated (N-linked (GlcNAc...) asparagine). A helical transmembrane segment spans residues 182–202; it reads LWSFIPFTLSLISFLMLICSL. Over 203-229 the chain is Cytoplasmic; it reads CKHVKKMQLHGEGSQDLSTKVHIKALQ. A helical membrane pass occupies residues 230-250; that stretch reads TLISFLLLCAIFFLFLIISIW. Topologically, residues 251 to 259 are extracellular; the sequence is NPRRLQNDP. Residues 260–280 form a helical membrane-spanning segment; that stretch reads VVVVSKAVGNIYLALDSFILI. The Cytoplasmic portion of the chain corresponds to 281-299; sequence WRTKKLKHTFLLILCQIRC.

It belongs to the G-protein coupled receptor T2R family.

It localises to the membrane. Functionally, receptor that may play a role in the perception of bitterness and is gustducin-linked. May play a role in sensing the chemical composition of the gastrointestinal content. The activity of this receptor may stimulate alpha gustducin, mediate PLC-beta-2 activation and lead to the gating of TRPM5. In Pongo pygmaeus (Bornean orangutan), this protein is Taste receptor type 2 member 50 (TAS2R50).